A 500-amino-acid chain; its full sequence is MIPVVALVGRPNVGKSTLFNRVTRTRDALVADFPGLTRDRKYGRAKLEEQEFILIDTGGIDGTEEGVETKMAEQSLAAIEEADVVLFMVDGRAGLTSSDEAIAKHLRSREKPTFLVVNKIDGIDADAASAEFWQLGMSKVYQIAASHGRGVTSLLELALAPFMEELVEESLRDENGEITDLTEFEDFEDEEKDLTEEDAEKDFARLQDQPIKLAIIGRPNVGKSTLINRILGEERVVVYDMPGTTRDSIYIPMEREGQEYVLIDTAGVRRRGRINETVEKFSVIKTLKAIEDANVVLLVIDARENISDQDLSLLGFALNAGRSLVIAVNKWDGLNNEVKEKVKSELDRRLGFVDFARLHFISALHGTGVGHLYESVQEAYVSATKRVGTSVLTRVMKMAQDDHQPPMVRGRRVKLKYAHAGGYNPPLIVIHGNQVKELPSSYKRFLMNYFRKSLEIMGTPIRIQFQNSENPFEDRGGKLTLSQERQRKRLVGAVKNRNKK.

EngA-type G domains are found at residues 3 to 166 (PVVA…MEEL) and 211 to 384 (IKLA…VSAT). GTP is bound by residues 9–16 (GRPNVGKS), 56–60 (DTGGI), 118–121 (NKID), 217–224 (GRPNVGKS), 264–268 (DTAGV), and 329–332 (NKWD). Residues 385-469 (KRVGTSVLTR…PIRIQFQNSE (85 aa)) enclose the KH-like domain. The interval 481-500 (LSQERQRKRLVGAVKNRNKK) is disordered. Positions 486–500 (QRKRLVGAVKNRNKK) are enriched in basic residues.

Belongs to the TRAFAC class TrmE-Era-EngA-EngB-Septin-like GTPase superfamily. EngA (Der) GTPase family. Associates with the 50S ribosomal subunit.

GTPase that plays an essential role in the late steps of ribosome biogenesis. The polypeptide is GTPase Der (Aliivibrio salmonicida (strain LFI1238) (Vibrio salmonicida (strain LFI1238))).